The primary structure comprises 114 residues: Procyclic form-specific polypeptide A-alpha (114 aa).

Residues 1 to 27 form the signal peptide; the sequence is MAPRSLYLLAILLFSANLFAGVGFAAA. Residues 33–95 are disordered; that stretch reads SNVIVKGGKG…EPEPEPGAAT (63 aa). The span at 47 to 89 shows a compositional bias: acidic residues; that stretch reads DGPEEPEETGPEETGPEETGPEETGPEETGPEETGPEETEPEP. 7 repeat units span residues 48-52, 56-60, 61-65, 66-70, 71-75, 76-80, and 81-85. Residues 48–85 form a 7 X 5 AA tandem repeats of G-P-E-E-[PT] region; the sequence is GPEEPEETGPEETGPEETGPEETGPEETGPEETGPEET. The GPI-anchor amidated glycine moiety is linked to residue Gly92. Positions 93–114 are excised as a propeptide; the sequence is AATLKSVALPFAVAAAALVAAF.

The protein resides in the cell membrane. Its function is as follows. Major surface antigen of procyclic forms. This chain is Procyclic form-specific polypeptide A-alpha (PARPA-ALPHA), found in Trypanosoma brucei brucei.